Here is a 114-residue protein sequence, read N- to C-terminus: N(4)-acetylcytidine amidohydrolase (114 aa).

Residues 8-93 (TFFEFLTPLV…ALIQEIYPNI (86 aa)) enclose the ASCH domain. The active-site Proton acceptor is Lys-22. Thr-25 serves as the catalytic Nucleophile. Catalysis depends on Glu-75, which acts as the Proton donor.

This sequence belongs to the N(4)-acetylcytidine amidohydrolase family.

The catalysed reaction is N(4)-acetylcytidine + H2O = cytidine + acetate + H(+). It carries out the reaction N(4)-acetyl-2'-deoxycytidine + H2O = 2'-deoxycytidine + acetate + H(+). It catalyses the reaction N(4)-acetylcytosine + H2O = cytosine + acetate + H(+). Functionally, catalyzes the hydrolysis of N(4)-acetylcytidine (ac4C). In Vibrio cholerae serotype O1 (strain ATCC 39541 / Classical Ogawa 395 / O395), this protein is N(4)-acetylcytidine amidohydrolase.